Here is a 173-residue protein sequence, read N- to C-terminus: Competence protein C (173 aa).

Its function is as follows. Involved in transformation (genetic competence for DNA uptake). This chain is Competence protein C (comC), found in Haemophilus influenzae (strain ATCC 51907 / DSM 11121 / KW20 / Rd).